A 301-amino-acid chain; its full sequence is Sulfate adenylyltransferase subunit 2 (301 aa).

The segment at 279 to 301 (RQGRMIDHDSSGSMEEKKKQGYF) is disordered.

It belongs to the PAPS reductase family. CysD subfamily. As to quaternary structure, heterodimer composed of CysD, the smaller subunit, and CysN.

It carries out the reaction sulfate + ATP + H(+) = adenosine 5'-phosphosulfate + diphosphate. It functions in the pathway sulfur metabolism; hydrogen sulfide biosynthesis; sulfite from sulfate: step 1/3. In terms of biological role, with CysN forms the ATP sulfurylase (ATPS) that catalyzes the adenylation of sulfate producing adenosine 5'-phosphosulfate (APS) and diphosphate, the first enzymatic step in sulfur assimilation pathway. APS synthesis involves the formation of a high-energy phosphoric-sulfuric acid anhydride bond driven by GTP hydrolysis by CysN coupled to ATP hydrolysis by CysD. This is Sulfate adenylyltransferase subunit 2 from Marinomonas sp. (strain MWYL1).